A 409-amino-acid polypeptide reads, in one-letter code: Toluene 1,2-dioxygenase system ferredoxin--NAD(+) reductase component (409 aa).

His4 to Asp35 serves as a coordination point for FAD. NAD(+) is bound at residue Arg145–Glu173.

Belongs to the bacterial ring-hydroxylating dioxygenase ferredoxin reductase family. In terms of assembly, this dioxygenase system consists of four proteins: the two subunits of the hydroxylase component (todC1 and todC2), a ferredoxin (TodB) and a ferredoxin reductase (TodA). FAD is required as a cofactor.

It catalyses the reaction 2 reduced [2Fe-2S]-[ferredoxin] + NAD(+) + H(+) = 2 oxidized [2Fe-2S]-[ferredoxin] + NADH. It participates in xenobiotic degradation; toluene degradation. Its function is as follows. Part of the electron transfer component of toluene 1,2-dioxygenase, transfers electrons from ferredoxin (TodB) to NADH. The polypeptide is Toluene 1,2-dioxygenase system ferredoxin--NAD(+) reductase component (todA) (Pseudomonas putida (Arthrobacter siderocapsulatus)).